The following is a 253-amino-acid chain: MRKPIIAGNWKMNKTVKEAKDFVNNLPTLPDEKEVESVICAPTIQLDALISLVNDGKAKGLKIGAQNTYFEDNGAFTGETSPVALADLGVKYVVIGHSERRELFHETDEDVNKKAHAVFNHGMTPIICVGETDEERENGKANEIVSNQVEKALEGLSEEQLKEVVIAYEPIWAIGTGKSATSDDANEMCAHVRKTVAKVASQDVADATRIQYGGSVKPNNVKEYMAQSDIDGALVGGASLKVEDFVQLLEGAK.

9-11 contributes to the substrate binding site; sequence NWK. The Electrophile role is filled by His-97. The Proton acceptor role is filled by Glu-169. Substrate is bound by residues Gly-175, Ser-215, and 236-237; that span reads GG.

The protein belongs to the triosephosphate isomerase family. Homodimer.

It localises to the cytoplasm. It catalyses the reaction D-glyceraldehyde 3-phosphate = dihydroxyacetone phosphate. Its pathway is carbohydrate biosynthesis; gluconeogenesis. It functions in the pathway carbohydrate degradation; glycolysis; D-glyceraldehyde 3-phosphate from glycerone phosphate: step 1/1. In terms of biological role, involved in the gluconeogenesis. Catalyzes stereospecifically the conversion of dihydroxyacetone phosphate (DHAP) to D-glyceraldehyde-3-phosphate (G3P). The chain is Triosephosphate isomerase from Staphylococcus haemolyticus (strain JCSC1435).